Here is a 631-residue protein sequence, read N- to C-terminus: Phosphomethylpyrimidine synthase (631 aa).

Residues N239, M268, Y297, H333, 353–355, 394–397, and E433 each bind substrate; these read SRG and DGLR. H437 is a Zn(2+) binding site. Y460 contacts substrate. H501 contacts Zn(2+). 3 residues coordinate [4Fe-4S] cluster: C581, C584, and C589.

The protein belongs to the ThiC family. Homodimer. [4Fe-4S] cluster serves as cofactor.

The enzyme catalyses 5-amino-1-(5-phospho-beta-D-ribosyl)imidazole + S-adenosyl-L-methionine = 4-amino-2-methyl-5-(phosphooxymethyl)pyrimidine + CO + 5'-deoxyadenosine + formate + L-methionine + 3 H(+). The protein operates within cofactor biosynthesis; thiamine diphosphate biosynthesis. Catalyzes the synthesis of the hydroxymethylpyrimidine phosphate (HMP-P) moiety of thiamine from aminoimidazole ribotide (AIR) in a radical S-adenosyl-L-methionine (SAM)-dependent reaction. The sequence is that of Phosphomethylpyrimidine synthase from Escherichia coli O81 (strain ED1a).